Here is a 437-residue protein sequence, read N- to C-terminus: Adenylosuccinate synthetase (437 aa).

GTP is bound by residues 12 to 18 (GDEGKGK) and 40 to 42 (GHT). Catalysis depends on Asp13, which acts as the Proton acceptor. Mg(2+) is bound by residues Asp13 and Gly40. IMP is bound by residues 13-16 (DEGK), 38-41 (NAGH), Thr128, Arg142, Gln223, Thr238, and Arg302. Residue His41 is the Proton donor of the active site. Residue 298 to 304 (TTTGRRR) participates in substrate binding. GTP-binding positions include Arg304, 330-332 (KLD), and 412-414 (SLG).

The protein belongs to the adenylosuccinate synthetase family. In terms of assembly, homodimer. The cofactor is Mg(2+).

The protein resides in the cytoplasm. It carries out the reaction IMP + L-aspartate + GTP = N(6)-(1,2-dicarboxyethyl)-AMP + GDP + phosphate + 2 H(+). Its pathway is purine metabolism; AMP biosynthesis via de novo pathway; AMP from IMP: step 1/2. Functionally, plays an important role in the de novo pathway of purine nucleotide biosynthesis. Catalyzes the first committed step in the biosynthesis of AMP from IMP. In Synechococcus sp. (strain CC9311), this protein is Adenylosuccinate synthetase.